Consider the following 165-residue polypeptide: Crossover junction endodeoxyribonuclease RuvC (165 aa).

Residues D7, E67, and D140 contribute to the active site. 3 residues coordinate Mg(2+): D7, E67, and D140.

The protein belongs to the RuvC family. In terms of assembly, homodimer which binds Holliday junction (HJ) DNA. The HJ becomes 2-fold symmetrical on binding to RuvC with unstacked arms; it has a different conformation from HJ DNA in complex with RuvA. In the full resolvosome a probable DNA-RuvA(4)-RuvB(12)-RuvC(2) complex forms which resolves the HJ. Requires Mg(2+) as cofactor.

Its subcellular location is the cytoplasm. It catalyses the reaction Endonucleolytic cleavage at a junction such as a reciprocal single-stranded crossover between two homologous DNA duplexes (Holliday junction).. The RuvA-RuvB-RuvC complex processes Holliday junction (HJ) DNA during genetic recombination and DNA repair. Endonuclease that resolves HJ intermediates. Cleaves cruciform DNA by making single-stranded nicks across the HJ at symmetrical positions within the homologous arms, yielding a 5'-phosphate and a 3'-hydroxyl group; requires a central core of homology in the junction. The consensus cleavage sequence is 5'-(A/T)TT(C/G)-3'. Cleavage occurs on the 3'-side of the TT dinucleotide at the point of strand exchange. HJ branch migration catalyzed by RuvA-RuvB allows RuvC to scan DNA until it finds its consensus sequence, where it cleaves and resolves the cruciform DNA. This Halothermothrix orenii (strain H 168 / OCM 544 / DSM 9562) protein is Crossover junction endodeoxyribonuclease RuvC.